We begin with the raw amino-acid sequence, 207 residues long: Small ribosomal subunit protein uS4c (207 aa).

An S4 RNA-binding domain is found at 92–156 (MRLDNILFRL…YQSIITKRIE (65 aa)).

This sequence belongs to the universal ribosomal protein uS4 family. In terms of assembly, part of the 30S ribosomal subunit. Contacts protein S5. The interaction surface between S4 and S5 is involved in control of translational fidelity.

It is found in the plastid. The protein resides in the chloroplast. In terms of biological role, one of the primary rRNA binding proteins, it binds directly to 16S rRNA where it nucleates assembly of the body of the 30S subunit. Functionally, with S5 and S12 plays an important role in translational accuracy. In Equisetum sylvaticum (Wood horsetail), this protein is Small ribosomal subunit protein uS4c (rps4).